A 458-amino-acid polypeptide reads, in one-letter code: Transcription factor ORF10 (458 aa).

The segment at residues 38 to 65 (CESCRLKKLRCSGHKSGCDRCRSQAMKC) is a DNA-binding region (zn(2)-C6 fungal-type). Positions 69 to 109 (IGAPSNSSRPKSRSHFQPNFSNMSGTAGTSKAPSPLGNDGV) are disordered. Polar residues predominate over residues 71-100 (APSNSSRPKSRSHFQPNFSNMSGTAGTSKA).

Its subcellular location is the nucleus. Transcription factor that specifically regulates the expression of the gene cluster that mediates the biosynthesis of PR-toxin, a bicyclic sesquiterpene belonging to the eremophilane class and acting as a mycotoxin. The protein is Transcription factor ORF10 of Penicillium roqueforti (strain FM164).